Here is a 443-residue protein sequence, read N- to C-terminus: Delta(6)-fatty-acid desaturase fat-3 (443 aa).

The region spanning 1–71 is the Cytochrome b5 heme-binding domain; the sequence is MVVDKNASGL…DLLKKHGEHD (71 aa). The next 3 helical transmembrane spans lie at 136–156, 296–316, and 318–338; these read IMAFAFYLQYLGWYITSACLL, TIVGHWAWVFYQLFLLPTWPL, and VAYFIISQMGGGLLIAHVVTF.

Belongs to the fatty acid desaturase type 1 family.

It localises to the membrane. The enzyme catalyses (9Z,12Z)-octadecadienoyl-CoA + 2 Fe(II)-[cytochrome b5] + O2 + 2 H(+) = (6Z,9Z,12Z)-octadecatrienoyl-CoA + 2 Fe(III)-[cytochrome b5] + 2 H2O. The catalysed reaction is (9Z,12Z,15Z)-octadecatrienoyl-CoA + 2 Fe(II)-[cytochrome b5] + O2 + 2 H(+) = (6Z,9Z,12Z,15Z)-octadecatetraenoyl-CoA + 2 Fe(III)-[cytochrome b5] + 2 H2O. It functions in the pathway lipid metabolism; polyunsaturated fatty acid biosynthesis. Its function is as follows. Can function as a Delta(6) fatty acid desaturase. Introduces a double bond in the fatty acid chain 6 carbons away from carboxy terminal to biosynthesize polyunsaturated fatty acids (PUFAs) endogenously (PUFAs are essential for membrane structure and many cellular and physiological processes). Acts on a variety of substrates such as linoleoyl-CoA ((9Z,12Z)-octadecadienoyl-CoA, C18:2n-6) and alpha-linolenoyl-CoA ((9Z,12Z,15Z)-octadecatrienoyl-CoA, C18:3n-3) to produce gamma-linolenoyl-CoA ((6Z,9Z,12Z)-octadecatrienoyl-CoA, C18:3n-6) and (6Z,9Z,12Z,15Z)-octadecatetraenoyl-CoA (18:4n-3) respectively. Unlike plants, Caenorhabditis elegans desaturases seem to use fatty acyl-CoAs as substrates. Plays a role in synaptic vesicle recycling by regulating synaptojanin unc-26 localization at synapses. This is Delta(6)-fatty-acid desaturase fat-3 (fat-3) from Caenorhabditis elegans.